Consider the following 431-residue polypeptide: Protein cereblon (431 aa).

The disordered stretch occupies residues 1–36 (MGNQLQLLPENEEEEEDDMETEDRDGEDVEKPSIIN). Residues 10–28 (ENEEEEEDDMETEDRDGED) are compositionally biased toward acidic residues. In terms of domain architecture, Lon N-terminal spans 69–309 (LPVLPHVALI…CELDIMDRCT (241 aa)). Residues 308 to 416 (CTSLCCKQCQ…LTRSALLPTI (109 aa)) enclose the CULT domain. Residues C313 and C316 each coordinate Zn(2+). Residues H368, W370, and W376 each coordinate (S)-thalidomide. Residues C381 and C384 each contribute to the Zn(2+) site.

The protein belongs to the CRBN family. Component of a DCX (DDB1-CUL4-X-box) protein ligase complex. Highly expressed in brain, head, vasculature otic vesicles and developing pectoral fins.

Its subcellular location is the cytoplasm. The protein localises to the nucleus. It participates in protein modification; protein ubiquitination. Substrate recognition component of a DCX (DDB1-CUL4-X-box) E3 protein ligase complex that mediates the ubiquitination and subsequent proteasomal degradation of target proteins, such as MEIS2. Normal degradation of key regulatory proteins is required for normal limb outgrowth and expression of the fibroblast growth factor FGF8. Maintains presynaptic glutamate release and consequently cognitive functions, such as memory and learning, by negatively regulating large-conductance calcium-activated potassium (BK) channels in excitatory neurons. Likely to function by regulating the assembly and neuronal surface expression of BK channels via its interaction with KCNT1. May also be involved in regulating anxiety-like behaviors via a BK channel-independent mechanism. The sequence is that of Protein cereblon (crbn) from Danio rerio (Zebrafish).